Here is a 327-residue protein sequence, read N- to C-terminus: GTPase Obg (327 aa).

The region spanning 1 to 159 (MQFIDQANII…WEVQLELKLL (159 aa)) is the Obg domain. The region spanning 160–327 (AEVGIIGLPN…SLLSEVWNRI (168 aa)) is the OBG-type G domain. ATP is bound by residues 166–173 (GLPNAGKS), 191–195 (FTTLI), 213–216 (DIPG), 280–283 (NKKE), and 309–311 (SSA). Mg(2+)-binding residues include Ser173 and Thr193.

It belongs to the TRAFAC class OBG-HflX-like GTPase superfamily. OBG GTPase family. Monomer. Mg(2+) is required as a cofactor.

Its subcellular location is the cytoplasm. Functionally, an essential GTPase which binds GTP, GDP and possibly (p)ppGpp with moderate affinity, with high nucleotide exchange rates and a fairly low GTP hydrolysis rate. Plays a role in control of the cell cycle, stress response, ribosome biogenesis and in those bacteria that undergo differentiation, in morphogenesis control. This chain is GTPase Obg, found in Prochlorococcus marinus (strain MIT 9515).